A 515-amino-acid polypeptide reads, in one-letter code: Vacuolar segregation protein PEP7 (515 aa).

The segment at 6-29 (VSCPICLRKFDNLQALNAHLDVEH) adopts a C2H2-type zinc-finger fold. Residues 36–58 (DSLGSNDSRLVNGKQKKARSVDS) are disordered. The segment at 72-137 (KKGKSCCHTC…CCHDCFVTKP (66 aa)) adopts an FYVE-type 1; atypical zinc-finger fold. Residues Cys78, Cys81, Cys94, Cys97, Cys102, His105, Cys129, Cys132, Cys221, Cys224, Cys237, Cys240, Cys245, Cys252, Cys289, and Cys292 each contribute to the Zn(2+) site. Residues 215-297 (DRSVLFCNIC…LCSHCIDMLF (83 aa)) form an FYVE-type 2 zinc finger.

As to quaternary structure, interacts with VPS21, VPS45, PEP3 and PEP5.

The protein localises to the vacuole membrane. In terms of biological role, required for vacuole segregation and vacuole protein sorting. Possibly part of a complex which tethers the vacuole membrane to microtubules, either directly or via kinesin or dynein-like motor proteins. Probably functions in several interorganelle traffic pathways. This chain is Vacuolar segregation protein PEP7 (PEP7), found in Saccharomyces cerevisiae (strain ATCC 204508 / S288c) (Baker's yeast).